The following is a 281-amino-acid chain: Bifunctional protein FolD (281 aa).

An NADP(+)-binding site is contributed by 163 to 165; it reads GRS.

Belongs to the tetrahydrofolate dehydrogenase/cyclohydrolase family. As to quaternary structure, homodimer.

It carries out the reaction (6R)-5,10-methylene-5,6,7,8-tetrahydrofolate + NADP(+) = (6R)-5,10-methenyltetrahydrofolate + NADPH. It catalyses the reaction (6R)-5,10-methenyltetrahydrofolate + H2O = (6R)-10-formyltetrahydrofolate + H(+). It functions in the pathway one-carbon metabolism; tetrahydrofolate interconversion. Catalyzes the oxidation of 5,10-methylenetetrahydrofolate to 5,10-methenyltetrahydrofolate and then the hydrolysis of 5,10-methenyltetrahydrofolate to 10-formyltetrahydrofolate. This is Bifunctional protein FolD from Leuconostoc mesenteroides subsp. mesenteroides (strain ATCC 8293 / DSM 20343 / BCRC 11652 / CCM 1803 / JCM 6124 / NCDO 523 / NBRC 100496 / NCIMB 8023 / NCTC 12954 / NRRL B-1118 / 37Y).